The following is a 191-amino-acid chain: Large ribosomal subunit protein uL6 (191 aa).

Belongs to the universal ribosomal protein uL6 family. In terms of assembly, part of the 50S ribosomal subunit.

In terms of biological role, this protein binds to the 23S rRNA, and is important in its secondary structure. It is located near the subunit interface in the base of the L7/L12 stalk, and near the tRNA binding site of the peptidyltransferase center. The sequence is that of Large ribosomal subunit protein uL6 from Cyanothece sp. (strain PCC 7425 / ATCC 29141).